The primary structure comprises 96 residues: ATP-dependent Clp protease adapter protein ClpS (96 aa).

This sequence belongs to the ClpS family. In terms of assembly, binds to the N-terminal domain of the chaperone ClpA.

In terms of biological role, involved in the modulation of the specificity of the ClpAP-mediated ATP-dependent protein degradation. The protein is ATP-dependent Clp protease adapter protein ClpS of Streptomyces coelicolor (strain ATCC BAA-471 / A3(2) / M145).